We begin with the raw amino-acid sequence, 83 residues long: MKTSMFLTLTGLVLLFVVCYASESEEKEFPKELLSSIFAADSDFKVEERGCLGDKCDYNNGCCSGYVCSRTWKWCVLAGPWRR.

The N-terminal stretch at Met-1–Ala-21 is a signal peptide. Positions Ser-22 to Arg-49 are excised as a propeptide. Disulfide bonds link Cys-51-Cys-63, Cys-56-Cys-68, and Cys-62-Cys-75.

It belongs to the neurotoxin 10 (Hwtx-1) family. 51 (Hntx-8) subfamily. Hntx-8 sub-subfamily. In terms of tissue distribution, expressed by the venom gland.

It localises to the secreted. Agglutinates erythrocytes. The polypeptide is U5-theraphotoxin-Hs1a 6 (Cyriopagopus schmidti (Chinese bird spider)).